Reading from the N-terminus, the 302-residue chain is Oxygen-dependent coproporphyrinogen-III oxidase (302 aa).

Serine 94 is a binding site for substrate. A divalent metal cation is bound by residues histidine 98 and histidine 108. The active-site Proton donor is histidine 108. 110–112 (NVR) contributes to the substrate binding site. Residues histidine 147 and histidine 177 each coordinate a divalent metal cation. The segment at 242–277 (YVEFNLVWDRGTLFGLQTGGRTESILMSMPPLVRWE) is important for dimerization. 260–262 (GGR) contacts substrate.

Belongs to the aerobic coproporphyrinogen-III oxidase family. In terms of assembly, homodimer. The cofactor is a divalent metal cation.

It is found in the cytoplasm. The catalysed reaction is coproporphyrinogen III + O2 + 2 H(+) = protoporphyrinogen IX + 2 CO2 + 2 H2O. Its pathway is porphyrin-containing compound metabolism; protoporphyrin-IX biosynthesis; protoporphyrinogen-IX from coproporphyrinogen-III (O2 route): step 1/1. Involved in the heme biosynthesis. Catalyzes the aerobic oxidative decarboxylation of propionate groups of rings A and B of coproporphyrinogen-III to yield the vinyl groups in protoporphyrinogen-IX. The polypeptide is Oxygen-dependent coproporphyrinogen-III oxidase (Erwinia tasmaniensis (strain DSM 17950 / CFBP 7177 / CIP 109463 / NCPPB 4357 / Et1/99)).